The primary structure comprises 613 residues: Phosphoinositide phospholipase C 6 (613 aa).

One can recognise a PI-PLC X-box domain in the interval 137–281 (QDMTAPLSHY…LLHRIIISTK (145 aa)). Catalysis depends on residues histidine 152 and histidine 198. A disordered region spans residues 288–349 (ESRNPIVKQK…ASEDQKPAYK (62 aa)). A PI-PLC Y-box domain is found at 349–465 (KRLITIHAGK…GYVKKPNFLM (117 aa)). The region spanning 466–595 (KKGFHDEVFD…PGIRSVPLYD (130 aa)) is the C2 domain.

Ca(2+) serves as cofactor. As to expression, expressed in leaves, flowers and siliques, but not in roots.

It is found in the cell membrane. The catalysed reaction is a 1,2-diacyl-sn-glycero-3-phospho-(1D-myo-inositol-4,5-bisphosphate) + H2O = 1D-myo-inositol 1,4,5-trisphosphate + a 1,2-diacyl-sn-glycerol + H(+). Its function is as follows. The production of the second messenger molecules diacylglycerol (DAG) and inositol 1,4,5-trisphosphate (IP3) is mediated by activated phosphatidylinositol-specific phospholipase C enzymes. This chain is Phosphoinositide phospholipase C 6 (PLC6), found in Arabidopsis thaliana (Mouse-ear cress).